Consider the following 500-residue polypeptide: MKMKLTNLLHEFPELKLGSLPSGKNPDSVPIEYIQSDSRKTNPEDIFCVPESIGTKKGEFISNTKASVILLHRSSNISIDSSKIVLECEEDPEQLQGRIASFLLGHPSKTLEIVAVTGTNGKTSLTNILFALAKDQGKICGLIGTIGVKFGDRSIDTGYTTPDASSLNLILKQMKDEGVTTVFMEASSHGLKLGRIGGISLKAGVFTNLTQDHLDFHSDMEDYFESKFRLFEILDVSKSPFAVLDYSSPGGNELHRKIRNNLPDLPIKALDGIGGEYKVSNPFLTLQGTSYVLSLPGNRSQTISTNLLGSFNVRNTALAFLTGLGLGLDPKGMFSSLKEIPQIPGRFQIVYSKDRSRMAVVDYAHTPDALENIIRSVRNSRPKRLITLFGCGGDRDKTKRPKMARIAEELSDQVILTSDNPRSEKPEAILDEIQSGFSPGFTPLLREVDRARAISEGVGILPEGGCLLVAGKGHEEYQIIGKEKRHFSDVEEVRKAFGLF.

Position 38 (Ser-38) interacts with UDP-N-acetyl-alpha-D-muramoyl-L-alanyl-D-glutamate. An ATP-binding site is contributed by 118 to 124 (GTNGKTS). UDP-N-acetyl-alpha-D-muramoyl-L-alanyl-D-glutamate-binding positions include 160-161 (TT), Ser-187, and Arg-195. Lys-227 is subject to N6-carboxylysine. Meso-2,6-diaminopimelate is bound by residues Arg-395, 419–422 (DNPR), Gly-471, and Glu-475. Positions 419–422 (DNPR) match the Meso-diaminopimelate recognition motif motif.

It belongs to the MurCDEF family. MurE subfamily. It depends on Mg(2+) as a cofactor. Post-translationally, carboxylation is probably crucial for Mg(2+) binding and, consequently, for the gamma-phosphate positioning of ATP.

The protein resides in the cytoplasm. It carries out the reaction UDP-N-acetyl-alpha-D-muramoyl-L-alanyl-D-glutamate + meso-2,6-diaminopimelate + ATP = UDP-N-acetyl-alpha-D-muramoyl-L-alanyl-gamma-D-glutamyl-meso-2,6-diaminopimelate + ADP + phosphate + H(+). The protein operates within cell wall biogenesis; peptidoglycan biosynthesis. Catalyzes the addition of meso-diaminopimelic acid to the nucleotide precursor UDP-N-acetylmuramoyl-L-alanyl-D-glutamate (UMAG) in the biosynthesis of bacterial cell-wall peptidoglycan. This Leptospira borgpetersenii serovar Hardjo-bovis (strain L550) protein is UDP-N-acetylmuramoyl-L-alanyl-D-glutamate--2,6-diaminopimelate ligase.